Reading from the N-terminus, the 413-residue chain is Multifunctional CCA protein (413 aa).

2 residues coordinate ATP: Gly8 and Arg11. Residues Gly8 and Arg11 each contribute to the CTP site. Positions 21 and 23 each coordinate Mg(2+). ATP-binding residues include Arg91, Arg143, and Arg146. 3 residues coordinate CTP: Arg91, Arg143, and Arg146. The 102-residue stretch at 232 to 333 folds into the HD domain; that stretch reads TGVHVMMVVD…VRLFERSDAL (102 aa).

It belongs to the tRNA nucleotidyltransferase/poly(A) polymerase family. Bacterial CCA-adding enzyme type 1 subfamily. As to quaternary structure, monomer. Can also form homodimers and oligomers. Requires Mg(2+) as cofactor. The cofactor is Ni(2+).

The catalysed reaction is a tRNA precursor + 2 CTP + ATP = a tRNA with a 3' CCA end + 3 diphosphate. It carries out the reaction a tRNA with a 3' CCA end + 2 CTP + ATP = a tRNA with a 3' CCACCA end + 3 diphosphate. Its function is as follows. Catalyzes the addition and repair of the essential 3'-terminal CCA sequence in tRNAs without using a nucleic acid template. Adds these three nucleotides in the order of C, C, and A to the tRNA nucleotide-73, using CTP and ATP as substrates and producing inorganic pyrophosphate. tRNA 3'-terminal CCA addition is required both for tRNA processing and repair. Also involved in tRNA surveillance by mediating tandem CCA addition to generate a CCACCA at the 3' terminus of unstable tRNAs. While stable tRNAs receive only 3'-terminal CCA, unstable tRNAs are marked with CCACCA and rapidly degraded. The polypeptide is Multifunctional CCA protein (Burkholderia cenocepacia (strain ATCC BAA-245 / DSM 16553 / LMG 16656 / NCTC 13227 / J2315 / CF5610) (Burkholderia cepacia (strain J2315))).